A 553-amino-acid chain; its full sequence is Putative transport protein YidE (553 aa).

5 consecutive transmembrane segments (helical) span residues 4-24 (IALT…IGNV), 28-48 (GVGL…HFVS), 65-85 (FGLI…FFAS), 95-115 (LFAV…HKLF), and 158-178 (MSYA…MWML). RCK C-terminal domains lie at 191–276 (QQHE…VIGQ) and 279–361 (DTSL…VLGN). Helical transmembrane passes span 371–391 (MLPV…PVFV), 393–413 (GFPA…ALIL), 439–459 (IVLF…HTLV), 464–484 (LSWI…VGIL), 493–513 (YLTM…LAFA), and 533–553 (LVMF…WSIG).

This sequence belongs to the AAE transporter (TC 2.A.81) family. YidE subfamily.

It localises to the cell membrane. This chain is Putative transport protein YidE, found in Escherichia coli O6:H1 (strain CFT073 / ATCC 700928 / UPEC).